A 432-amino-acid polypeptide reads, in one-letter code: MTQLEAAQVGQVTRAMEQVAAREKVRVEDLMAEVAAGRVVIPVNKNHHKLQPCGIGRGLRTKVNANLGTSTDYPDIAAELEKLQVALDAGADAVMDLSTGGDINECRRQVIARSPATVGTVPIYQATVEAQEKYGALVKMTVDDLFRVIEMQAEDGVDFITVHCGVTMEVVERLRREGRLADIVSRGGSFLTGWMLHNEQENPLYAHYDRLLEIARRYDVTLSLGDGLRPGCLADATDRAQIQELIILGELVDRAREAGVQAMVEGPGHVPLNQIQANILLEKRLCHEAPFYVLGPLVTDVAPGYDHLTAAIGGALAAAAGADFICYVTPAEHLGLPTLADVREGVIAARIAGHAADLAKGLPGAWEWDREMARARKALDWQRQIELALDPEKARQYRRARNDEGAVACSMCGDFCAMRLVGEYLGKPSETC.

Residues Asn-66, Met-95, Tyr-124, His-163, 185–187 (SRG), 226–229 (DGLR), and Glu-265 contribute to the substrate site. His-269 is a Zn(2+) binding site. Residue Tyr-292 participates in substrate binding. His-333 is a Zn(2+) binding site. The [4Fe-4S] cluster site is built by Cys-409, Cys-412, and Cys-416.

This sequence belongs to the ThiC family. [4Fe-4S] cluster is required as a cofactor.

It catalyses the reaction 5-amino-1-(5-phospho-beta-D-ribosyl)imidazole + S-adenosyl-L-methionine = 4-amino-2-methyl-5-(phosphooxymethyl)pyrimidine + CO + 5'-deoxyadenosine + formate + L-methionine + 3 H(+). It participates in cofactor biosynthesis; thiamine diphosphate biosynthesis. In terms of biological role, catalyzes the synthesis of the hydroxymethylpyrimidine phosphate (HMP-P) moiety of thiamine from aminoimidazole ribotide (AIR) in a radical S-adenosyl-L-methionine (SAM)-dependent reaction. This chain is Phosphomethylpyrimidine synthase, found in Moorella thermoacetica (strain ATCC 39073 / JCM 9320).